We begin with the raw amino-acid sequence, 250 residues long: 1-(5-phosphoribosyl)-5-[(5-phosphoribosylamino)methylideneamino] imidazole-4-carboxamide isomerase (250 aa).

Asp10 acts as the Proton acceptor in catalysis. Residue Asp131 is the Proton donor of the active site.

It belongs to the HisA/HisF family.

The protein resides in the cytoplasm. It carries out the reaction 1-(5-phospho-beta-D-ribosyl)-5-[(5-phospho-beta-D-ribosylamino)methylideneamino]imidazole-4-carboxamide = 5-[(5-phospho-1-deoxy-D-ribulos-1-ylimino)methylamino]-1-(5-phospho-beta-D-ribosyl)imidazole-4-carboxamide. Its pathway is amino-acid biosynthesis; L-histidine biosynthesis; L-histidine from 5-phospho-alpha-D-ribose 1-diphosphate: step 4/9. The polypeptide is 1-(5-phosphoribosyl)-5-[(5-phosphoribosylamino)methylideneamino] imidazole-4-carboxamide isomerase (Desulfitobacterium hafniense (strain DSM 10664 / DCB-2)).